A 313-amino-acid chain; its full sequence is Beta-ketoacyl-[acyl-carrier-protein] synthase III (313 aa).

Residues Cys112 and His238 contribute to the active site. An ACP-binding region spans residues 239 to 243 (QANIR). Residue Asn268 is part of the active site.

The protein belongs to the thiolase-like superfamily. FabH family. Homodimer.

It is found in the cytoplasm. It catalyses the reaction malonyl-[ACP] + acetyl-CoA + H(+) = 3-oxobutanoyl-[ACP] + CO2 + CoA. Its pathway is lipid metabolism; fatty acid biosynthesis. Catalyzes the condensation reaction of fatty acid synthesis by the addition to an acyl acceptor of two carbons from malonyl-ACP. Catalyzes the first condensation reaction which initiates fatty acid synthesis and may therefore play a role in governing the total rate of fatty acid production. Possesses both acetoacetyl-ACP synthase and acetyl transacylase activities. Its substrate specificity determines the biosynthesis of branched-chain and/or straight-chain of fatty acids. The chain is Beta-ketoacyl-[acyl-carrier-protein] synthase III from Staphylococcus aureus (strain bovine RF122 / ET3-1).